A 586-amino-acid polypeptide reads, in one-letter code: Capsid scaffolding protein (586 aa).

Residues H53, S123, and H142 each act as charge relay system in the active site. A compositionally biased stretch (basic and acidic residues) spans 251–263 (SEETPENAIKDRS). 4 disordered regions span residues 251 to 288 (SEETPENAIKDRSVSTQTAPSFDISESQQPSGQTHVPA), 330 to 364 (ARRDNDRRPVSPSREFSRRSRDSTHECSPGRDIWP), 458 to 486 (NKRDSEYSENNPRKRSARTISENDPYFPG), and 530 to 586 (SASN…MMAD). Polar residues predominate over residues 264 to 284 (VSTQTAPSFDISESQQPSGQT). The segment at 312–331 (EDMVYVPFEKYASLLAASAR) is interaction with pAP. Interaction with major capsid protein regions lie at residues 566-586 (DAQTKLKRKKEAAAFAQMMAD) and 567-586 (AQTKLKRKKEAAAFAQMMAD).

This sequence belongs to the herpesviridae capsid scaffolding protein family. In terms of assembly, homomultimer. Interacts with major capsid protein. As to quaternary structure, exists in a monomer-dimer equilibrium with the dimer being the active species. Post-translationally, capsid scaffolding protein is cleaved by assemblin after formation of the spherical procapsid. As a result, the capsid obtains its mature, icosahedral shape. Cleavages occur at two or more sites: release (R-site) and maturation (M-site).

The protein resides in the host cytoplasm. It is found in the host nucleus. It carries out the reaction Cleaves -Ala-|-Ser- and -Ala-|-Ala- bonds in the scaffold protein.. Functionally, acts as a scaffold protein by binding major capsid protein in the cytoplasm, inducing the nuclear localization of both proteins. Multimerizes in the nucleus such as major capsid protein forms the icosahedral T=16 capsid. Autocatalytic cleavage releases the assembly protein, and subsequently abolishes interaction with major capsid protein. Cleavages products are evicted from the capsid before or during DNA packaging. Protease that plays an essential role in virion assembly within the nucleus. Catalyzes the cleavage of the assembly protein after formation of the spherical procapsid. By that cleavage, the capsid matures and gains its icosahedral shape. The cleavage sites seem to include -Ala-Ser-, -Ala-Ala-, as well as Ala-Thr bonds. Assemblin and cleavages products are evicted from the capsid before or during DNA packaging. Its function is as follows. Plays a major role in capsid assembly. Acts as a scaffold protein by binding major capsid protein. Multimerizes in the nucleus such as major capsid protein forms the icosahedral T=16 capsid. Cleaved by assemblin after capsid completion. The cleavages products are evicted from the capsid before or during DNA packaging. This chain is Capsid scaffolding protein, found in Gallus gallus (Chicken).